The sequence spans 459 residues: Exodeoxyribonuclease 7 large subunit (459 aa).

The protein belongs to the XseA family. In terms of assembly, heterooligomer composed of large and small subunits.

The protein localises to the cytoplasm. The enzyme catalyses Exonucleolytic cleavage in either 5'- to 3'- or 3'- to 5'-direction to yield nucleoside 5'-phosphates.. Bidirectionally degrades single-stranded DNA into large acid-insoluble oligonucleotides, which are then degraded further into small acid-soluble oligonucleotides. The chain is Exodeoxyribonuclease 7 large subunit from Pseudomonas fluorescens (strain SBW25).